The primary structure comprises 530 residues: Metal transporter Nramp2 (530 aa).

A disordered region spans residues 1-35 (MENDVKENLEEEEDRLLPPPPPSQSLPSTDSESEA). 12 helical membrane passes run 68-88 (LWLFTGPGFLMSIAFLDPGNL), 96-116 (AIAGYSLLWLLMWATAMGLLI), 153-173 (LALIGADIQEVIGSAIAIQIL), 177-197 (FLPLWAGVVITASDCFLFLFL), 205-225 (LEAVFAVLIATMGLSFAWMFG), 251-271 (AVGVVGCVIMPHNVFLHSALV), 297-317 (VALFISFMINLFVTTVFAKGF), 339-359 (FGGGLLPILYIWGIGLLAAGQ), 395-415 (IVPTMIVAIVFNTSEASLDVL), 418-438 (WLNVLQSVQIPFALLPLLTLV), 456-476 (IAWTVAALVMIINGYLLLDFF), and 484-504 (LFGVTVCVWTTAYIAFIVYLI).

It belongs to the NRAMP (TC 2.A.55) family.

It localises to the membrane. Its function is as follows. Seems to be involved in iron uptake. The polypeptide is Metal transporter Nramp2 (NRAMP2) (Arabidopsis thaliana (Mouse-ear cress)).